The sequence spans 316 residues: Ribosomal RNA small subunit methyltransferase H (316 aa).

S-adenosyl-L-methionine is bound by residues 35–37 (AGH), D55, F84, D105, and Q112.

The protein belongs to the methyltransferase superfamily. RsmH family.

Its subcellular location is the cytoplasm. It catalyses the reaction cytidine(1402) in 16S rRNA + S-adenosyl-L-methionine = N(4)-methylcytidine(1402) in 16S rRNA + S-adenosyl-L-homocysteine + H(+). In terms of biological role, specifically methylates the N4 position of cytidine in position 1402 (C1402) of 16S rRNA. This chain is Ribosomal RNA small subunit methyltransferase H, found in Streptococcus pneumoniae (strain 70585).